A 252-amino-acid polypeptide reads, in one-letter code: RNA-binding protein 2 (252 aa).

Disordered regions lie at residues 1–34 (MADG…PSGV) and 232–252 (RLQF…RGKR). Residues 152–238 (STLYVEGLPS…SYLRLQFSRS (87 aa)) form the RRM domain. Gly residues predominate over residues 242 to 252 (RSGGPGPRGKR).

Probable RNA-binding protein. This chain is RNA-binding protein 2, found in Medicago truncatula (Barrel medic).